The chain runs to 362 residues: Apelin receptor A (362 aa).

Topologically, residues 1–37 are extracellular; that stretch reads METEGLSPMLYEDDYYYGNETGLQPCDETDWDFSYSL. Asparagine 19 carries an N-linked (GlcNAc...) asparagine glycan. Disulfide bonds link cysteine 26–cysteine 286 and cysteine 108–cysteine 185. Residues 38 to 58 form a helical membrane-spanning segment; the sequence is LPVFYMIVFVLGLSGNGVVIF. Over 59–76 the chain is Cytoplasmic; sequence TVWKSKPKRRSADTYIGN. The chain crosses the membrane as a helical span at residues 77–97; the sequence is LALADLAFVVTLPLWATYTAL. Residues 98 to 110 are Extracellular-facing; the sequence is GFHWPFGSALCKL. Residues 111–131 traverse the membrane as a helical segment; it reads SSYLVLLNMFASVFCLTCLSF. Over 132 to 151 the chain is Cytoplasmic; that stretch reads DRYLAIVHSLSSAKLRSRSS. The helical transmembrane segment at 152–172 threads the bilayer; the sequence is IIVSLAVIWLFSGLLALPSLI. Over 173–199 the chain is Extracellular; that stretch reads LRDTRVEGNNTICDLDFSGVSSKENEN. Residue asparagine 181 is glycosylated (N-linked (GlcNAc...) asparagine). A helical transmembrane segment spans residues 200–220; it reads FWIGGLSILTTVPGFLLPLLL. The Cytoplasmic portion of the chain corresponds to 221–248; the sequence is MTIFYCFIGGKVTMHFQNLKKEEQKKKR. Residues 249 to 269 form a helical membrane-spanning segment; it reads LLKIIITLVVVFAICWLPFHI. At 270-296 the chain is on the extracellular side; it reads LKTIHFLDLMGFLELSCSTQNIIVSLH. The helical transmembrane segment at 297–317 threads the bilayer; it reads PYATCLAYVNSCLNPFLYAFF. The Cytoplasmic portion of the chain corresponds to 318 to 362; it reads DLRFRSQCFFFFGFKKVLQGHLSNTSSSLSAQTQKSEIHSLATKV.

The protein belongs to the G-protein coupled receptor 1 family. In terms of tissue distribution, expressed in all blood vessels including the posterior cardinal vein, intersomitic veins and the vitelline vein network. At the gastrula stage, exclusively expressed in the mesodermal layer and at the neurula stage in the lateral plate mesoderm. Larval expression is observed in the endothelium of the primary blood vessels and the forming heart.

Its subcellular location is the cell membrane. G protein-coupled receptor for peptide hormones apelin (apln) and apelin receptor early endogenous ligand (apela), that plays a role in the regulation of normal cardiovascular function and fluid homeostasis. When acting as apelin receptor, activates both G(i) protein pathway that inhibits adenylate cyclase activity, and the beta-arrestin pathway that promotes internalization of the receptor. Also functions as mechanoreceptor that is activated by pathological stimuli in a G-protein-independent fashion to induce beta-arrestin signaling, hence eliciting cardiac hypertrophy. However, the presence of apelin ligand blunts cardiac hypertrophic induction from APLNR/APJ on response to pathological stimuli. Plays a key role in early development such as gastrulation, blood vessels formation and heart morphogenesis by acting as a receptor for apela hormone, promoting endoderm and mesendoderm cell migration and regulating the migration of cells fated to become myocardial progenitors, respectively. Promotes angioblast migration toward the embryonic midline, i.e. the position of the future vessel formation, during vasculogenesis. May promote sinus venosus (SV)-derived endothelial cells migration into the developing heart to promote coronary blood vessel development. Required for cardiovascular development, particularly for intersomitic vein angiogenesis by acting as a receptor for apln hormone. Also plays a role in various processes in adults such as regulation of blood vessel formation, blood pressure, heart contractility, and heart failure. Acts upstream of the i/o type of G-alpha proteins in the differentiation of endothelium, erythroid cells, myeloid cells and cardiomyocytes. The protein is Apelin receptor A (aplnr-a) of Xenopus laevis (African clawed frog).